Here is a 357-residue protein sequence, read N- to C-terminus: Glucose-6-phosphatase catalytic subunit 1 (357 aa).

Residues 1-28 (MEKGMNVLHDFGIQSTHYLQVNYQNSQD) are Lumenal-facing. The chain crosses the membrane as a helical span at residues 29-49 (WFILVSVIADLRNAFYVLFPI). The Cytoplasmic portion of the chain corresponds to 50 to 60 (WFHLREAVGIK). The helical transmembrane segment at 61–81 (LLWVAVIGDWLNLVFKWILFG) threads the bilayer. The Lumenal segment spans residues 82–117 (QRPYWWVLDTDYYSNTSAPLIKQFPVTCETGPGSPS). Arg-83 lines the substrate pocket. Residue Asn-96 is glycosylated (N-linked (GlcNAc...) asparagine). A helical membrane pass occupies residues 118 to 138 (GHAMGTAGVYYVMVTSTLSIF). His-119 serves as the catalytic Proton donor. The Cytoplasmic segment spans residues 139–147 (RGKKKPTYR). Residues 148 to 168 (FRCLNVMLWLGFWVVQLNVCL) form a helical membrane-spanning segment. Over 169 to 170 (SR) the chain is Lumenal. Arg-170 contacts substrate. Residues 171 to 191 (IYLAAHFPHQVVAGVLSGIAV) traverse the membrane as a helical segment. The active-site Nucleophile is His-176. Topologically, residues 192 to 209 (AETFRHIQSIYNASLKKY) are cytoplasmic. The helical transmembrane segment at 210–230 (FLITCFLFSFAIGFYLLLKWL) threads the bilayer. Topologically, residues 231-254 (GVDLLWTLEKAKRRCERPEWVHID) are lumenal. The chain crosses the membrane as a helical span at residues 255–275 (TTPFASLLKNLGTLFGLGLAL). At 276-291 (NSSMYRESCKGKLSKW) the chain is on the cytoplasmic side. The helical transmembrane segment at 292–312 (FPFRLSCIVASLVLLHLFDSL) threads the bilayer. Residues 313–320 (KPPSQIEL) lie on the Lumenal side of the membrane. A helical membrane pass occupies residues 321-341 (IFYVLSFCKSAAVPLASVSLI). Residues 342-357 (PYCLAWVLGQPNKKTV) are Cytoplasmic-facing. The short motif at 354-357 (KKTV) is the Prevents secretion from ER element.

This sequence belongs to the glucose-6-phosphatase family.

The protein resides in the endoplasmic reticulum membrane. The enzyme catalyses D-glucose 6-phosphate + H2O = D-glucose + phosphate. The protein operates within carbohydrate biosynthesis; gluconeogenesis. Its function is as follows. Hydrolyzes glucose-6-phosphate to glucose in the endoplasmic reticulum. Forms with the glucose-6-phosphate transporter (SLC37A4/G6PT) the complex responsible for glucose production in the terminal step of glycogenolysis and gluconeogenesis. Hence, it is the key enzyme in homeostatic regulation of blood glucose levels. The polypeptide is Glucose-6-phosphatase catalytic subunit 1 (G6PC1) (Bos taurus (Bovine)).